The sequence spans 742 residues: Synaptic vesicle glycoprotein 2A (742 aa).

An interaction with SYT1 region spans residues methionine 1 to aspartate 57. Topologically, residues methionine 1–tyrosine 169 are cytoplasmic. Residues glutamate 40 to phenylalanine 49 show a composition bias toward basic and acidic residues. Positions glutamate 40 to arginine 145 are disordered. Residues serine 80 and serine 81 each carry the phosphoserine modification. Threonine 84 is subject to Phosphothreonine. Over residues valine 122–glycine 137 the composition is skewed to gly residues. A Phosphoserine modification is found at serine 127. Residues phenylalanine 170 to leucine 190 form a helical membrane-spanning segment. The Extracellular portion of the chain corresponds to proline 191 to glycine 205. The chain crosses the membrane as a helical span at residues methionine 206 to alanine 226. Residues aspartate 227–glutamine 233 are Cytoplasmic-facing. A helical membrane pass occupies residues cysteine 234–glycine 254. Residues tyrosine 255–arginine 262 lie on the Extracellular side of the membrane. The chain crosses the membrane as a helical span at residues leucine 263–phenylalanine 283. The Cytoplasmic portion of the chain corresponds to leucine 284–serine 294. A helical membrane pass occupies residues tryptophan 295–isoleucine 315. The Extracellular portion of the chain corresponds to proline 316 to arginine 334. The helical transmembrane segment at valine 335–proline 355 threads the bilayer. At glutamate 356–threonine 447 the chain is on the cytoplasmic side. Position 393 is a phosphoserine (serine 393). The chain crosses the membrane as a helical span at residues leucine 448–phenylalanine 468. Over proline 469–tyrosine 598 the chain is Extracellular. Phosphotyrosine is present on tyrosine 480. N-linked (GlcNAc...) asparagine glycosylation is found at asparagine 498, asparagine 548, and asparagine 573. The helical transmembrane segment at phenylalanine 599–methionine 619 threads the bilayer. Residues aspartate 620–arginine 626 lie on the Cytoplasmic side of the membrane. A helical transmembrane segment spans residues methionine 627–serine 647. Over glutamate 648 to methionine 651 the chain is Extracellular. Residues isoleucine 652–leucine 672 traverse the membrane as a helical segment. The Cytoplasmic portion of the chain corresponds to threonine 673–alanine 685. Residues phenylalanine 686–valine 708 traverse the membrane as a helical segment. The Extracellular portion of the chain corresponds to glycine 709–lysine 712. The chain crosses the membrane as a helical span at residues alanine 713–leucine 731. Topologically, residues lysine 732–glutamine 742 are cytoplasmic.

It belongs to the major facilitator superfamily. As to quaternary structure, interacts with SYT1/synaptotagmin-1 in a calcium-dependent manner. Binds the adapter protein complex AP-2. In terms of assembly, (Microbial infection) Interacts with C.botulinum neurotoxin type A (BoNT/A, botA). Post-translationally, phosphorylation by CK1 of the N-terminal cytoplasmic domain regulates interaction with SYT1. N-glycosylated. As to expression, expressed in conventional synapses and cone ribbon synapses in the retina (at protein level). Expressed in diaphragm motor nerve terminals (at protein level). Expressed in hippocampus neurons (at protein level).

Its subcellular location is the presynapse. It localises to the cytoplasmic vesicle. It is found in the secretory vesicle. The protein localises to the synaptic vesicle membrane. Plays a role in the control of regulated secretion in neural and endocrine cells, enhancing selectively low-frequency neurotransmission. Positively regulates vesicle fusion by maintaining the readily releasable pool of secretory vesicles. Its function is as follows. (Microbial infection) Receptor for C.botulinum neurotoxin type A (BoNT/A, botA); the toxin probably binds via extracellular loop 4. In terms of biological role, (Microbial infection) Possible receptor for C.botulinum neurotoxin type D (BoNT/D, botD); BoNT/D does not bind to extracellular loop 4 as do BoNT/A and BoNT/E. Functionally, (Microbial infection) Receptor for C.botulinum neurotoxin type E (BoNT/E); the toxin probably binds via extracellular loop 4. It probably requires glycosylation of Asn-573. This Mus musculus (Mouse) protein is Synaptic vesicle glycoprotein 2A (Sv2a).